The sequence spans 98 residues: Large ribosomal subunit protein bL28 (98 aa).

The protein belongs to the bacterial ribosomal protein bL28 family.

The protein is Large ribosomal subunit protein bL28 of Phenylobacterium zucineum (strain HLK1).